The chain runs to 299 residues: Leucine zipper transcription factor-like protein 1 (299 aa).

Residues 88–296 adopt a coiled-coil conformation; sequence LAQAEKWYLK…DLRKRLAQYE (209 aa). Residues 145–299 are interaction with BSS9; that stretch reads GTAELLNKEI…KRLAQYEPED (155 aa).

The protein belongs to the LZTFL1 family. As to quaternary structure, self-associates. Interacts with BBS9; the interaction mediates the association of LZTL1 with the BBsome complex and regulates BBSome ciliary trafficking.

The protein localises to the cytoplasm. In terms of biological role, regulates ciliary localization of the BBSome complex. Together with the BBSome complex, controls SMO ciliary trafficking and contributes to the sonic hedgehog (SHH) pathway regulation. May play a role in neurite outgrowth. May have tumor suppressor function. In Macaca fascicularis (Crab-eating macaque), this protein is Leucine zipper transcription factor-like protein 1 (LZTFL1).